Reading from the N-terminus, the 392-residue chain is Acetyl-CoA acetyltransferase (392 aa).

C85 serves as the catalytic Acyl-thioester intermediate. CoA is bound by residues C206, S207, V209, and K332. H336 serves as the catalytic Proton acceptor.

This sequence belongs to the thiolase-like superfamily. Thiolase family. Interacts with HMG-CoA synthase (HMGCS) that catalyzes the second step in the pathway and with a DUF35 protein. The acetoacetyl-CoA thiolase/HMG-CoA synthase complex channels the intermediate via a fused CoA-binding site, which allows for efficient coupling of the endergonic thiolase reaction with the exergonic HMGCS reaction.

The enzyme catalyses 2 acetyl-CoA = acetoacetyl-CoA + CoA. It participates in metabolic intermediate biosynthesis; (R)-mevalonate biosynthesis; (R)-mevalonate from acetyl-CoA: step 1/3. Its function is as follows. Catalyzes the condensation of two acetyl-coA molecules into acetoacetyl-CoA. Functions in the mevalonate (MVA) pathway leading to isopentenyl diphosphate (IPP), a key precursor for the biosynthesis of isoprenoid compounds that are building blocks of archaeal membrane lipids. The polypeptide is Acetyl-CoA acetyltransferase (Methanothermococcus thermolithotrophicus (Methanococcus thermolithotrophicus)).